The sequence spans 126 residues: Aspartate 1-decarboxylase (126 aa).

Ser25 serves as the catalytic Schiff-base intermediate with substrate; via pyruvic acid. The residue at position 25 (Ser25) is a Pyruvic acid (Ser). Position 57 (Thr57) interacts with substrate. The Proton donor role is filled by Tyr58. 72–74 (GAA) is a substrate binding site.

It belongs to the PanD family. Heterooctamer of four alpha and four beta subunits. The cofactor is pyruvate. Is synthesized initially as an inactive proenzyme, which is activated by self-cleavage at a specific serine bond to produce a beta-subunit with a hydroxyl group at its C-terminus and an alpha-subunit with a pyruvoyl group at its N-terminus.

Its subcellular location is the cytoplasm. It carries out the reaction L-aspartate + H(+) = beta-alanine + CO2. It participates in cofactor biosynthesis; (R)-pantothenate biosynthesis; beta-alanine from L-aspartate: step 1/1. Catalyzes the pyruvoyl-dependent decarboxylation of aspartate to produce beta-alanine. This chain is Aspartate 1-decarboxylase, found in Campylobacter jejuni subsp. jejuni serotype O:23/36 (strain 81-176).